The sequence spans 394 residues: Aspergillopepsin-1 (394 aa).

A signal peptide spans 1-20 (MVVFSKVTAAVFGLATIASA). The propeptide at 21–69 (APAPPTRKGFTVQQQARPAQKKQVNLPAMYAHALTKFGGSVPESVKVAA) is activation peptide. In terms of domain architecture, Peptidase A1 spans 85-391 (YLTPVNVGGT…DSEGPRLGFA (307 aa)). Active-site residues include D101 and D283. A disulfide bridge links C319 with C354.

The protein belongs to the peptidase A1 family. In terms of assembly, monomer.

It localises to the secreted. It carries out the reaction Hydrolysis of proteins with broad specificity. Generally favors hydrophobic residues in P1 and P1', but also accepts Lys in P1, which leads to activation of trypsinogen. Does not clot milk.. Secreted aspartic endopeptidase that allows assimilation of proteinaceous substrates. The scissile peptide bond is attacked by a nucleophilic water molecule activated by two aspartic residues in the active site. Shows a broad primary substrate specificity. Favors hydrophobic residues at the P1 and P1' positions, but also accepts a lysine residue in the P1 position, leading to the activation of trypsinogen and chymotrypsinogen A. The protein is Aspergillopepsin-1 (pepA) of Aspergillus clavatus (strain ATCC 1007 / CBS 513.65 / DSM 816 / NCTC 3887 / NRRL 1 / QM 1276 / 107).